The primary structure comprises 212 residues: Uracil phosphoribosyltransferase (212 aa).

5-phospho-alpha-D-ribose 1-diphosphate-binding positions include arginine 78, arginine 103, and 130-138 (DPMLATGGS). Residues isoleucine 193 and 198–200 (GDA) contribute to the uracil site. Aspartate 199 lines the 5-phospho-alpha-D-ribose 1-diphosphate pocket.

This sequence belongs to the UPRTase family. Requires Mg(2+) as cofactor.

The enzyme catalyses UMP + diphosphate = 5-phospho-alpha-D-ribose 1-diphosphate + uracil. It participates in pyrimidine metabolism; UMP biosynthesis via salvage pathway; UMP from uracil: step 1/1. Its activity is regulated as follows. Allosterically activated by GTP. Catalyzes the conversion of uracil and 5-phospho-alpha-D-ribose 1-diphosphate (PRPP) to UMP and diphosphate. The chain is Uracil phosphoribosyltransferase from Pseudomonas aeruginosa (strain LESB58).